Here is a 336-residue protein sequence, read N- to C-terminus: C2H2 finger domain transcription factor mtfA (336 aa).

The segment at 1–245 is disordered; the sequence is MDVASLISPS…PSPGHQQMIS (245 aa). 2 stretches are compositionally biased toward polar residues: residues 7–29 and 36–56; these read ISPSESDTVPTFRSRSIQNSSAS and EQSTGSYFSAVPTHTTSYSRT. Residues 136 to 149 are compositionally biased toward low complexity; it reads SPSTSSVSAASSSA. Residues 168–181 show a composition bias toward polar residues; sequence TDRSSISSQGSVQH. Over residues 182-210 the composition is skewed to low complexity; the sequence is AASAPYASPAPSVSSFSSPIEPSTPSTAA. The segment covering 216 to 245 has biased composition (polar residues); sequence PAPNTFQNPSPFPQTSTASLPSPGHQQMIS. C2H2-type zinc fingers lie at residues 272-294 and 300-325; these read YICRTCHKAFSRPSSLRIHSHSH and FRCTHAGCGKAFSVRSNMKRHERGCH.

It localises to the nucleus. Transcription factor that controls morphogenesis and virulence. Acts as a positive regulator of gliotixin and protease production. The polypeptide is C2H2 finger domain transcription factor mtfA (Aspergillus fumigatus (strain CBS 144.89 / FGSC A1163 / CEA10) (Neosartorya fumigata)).